Here is a 72-residue protein sequence, read N- to C-terminus: NAD(P)H-quinone oxidoreductase subunit O (72 aa).

Belongs to the complex I NdhO subunit family. In terms of assembly, NDH-1 can be composed of about 15 different subunits; different subcomplexes with different compositions have been identified which probably have different functions.

The protein localises to the cellular thylakoid membrane. The catalysed reaction is a plastoquinone + NADH + (n+1) H(+)(in) = a plastoquinol + NAD(+) + n H(+)(out). It carries out the reaction a plastoquinone + NADPH + (n+1) H(+)(in) = a plastoquinol + NADP(+) + n H(+)(out). Functionally, NDH-1 shuttles electrons from an unknown electron donor, via FMN and iron-sulfur (Fe-S) centers, to quinones in the respiratory and/or the photosynthetic chain. The immediate electron acceptor for the enzyme in this species is believed to be plastoquinone. Couples the redox reaction to proton translocation, and thus conserves the redox energy in a proton gradient. Cyanobacterial NDH-1 also plays a role in inorganic carbon-concentration. This chain is NAD(P)H-quinone oxidoreductase subunit O, found in Synechococcus elongatus (strain ATCC 33912 / PCC 7942 / FACHB-805) (Anacystis nidulans R2).